Here is a 465-residue protein sequence, read N- to C-terminus: Hepatocyte nuclear factor 6 (465 aa).

2 disordered regions span residues 15–84 (GVSH…GPLH) and 119–141 (SDKF…HQRL). Residues 123 to 140 (PHHHHHHHHHHHPHHHQR) are compositionally biased toward basic residues. Residues 283–369 (GSNSGQMEEI…QRMSALRLAA (87 aa)) constitute a DNA-binding region (CUT). Residues 385 to 444 (PKKPRLVFTDVQRRTLHAIFKENKRPSKELQITISQQLGLELSTVSNFFMNARRRSLDKW) constitute a DNA-binding region (homeobox). Residues 443-465 (KWQDEGGSNSGSSSSSSSTCTKA) form a disordered region. Positions 448–465 (GGSNSGSSSSSSSTCTKA) are enriched in low complexity.

This sequence belongs to the CUT homeobox family. Binds DNA as a monomer.

It is found in the nucleus. Transcriptional activator. Binds the consensus sequence 5'-DHWATTGAYTWWD-3' on a variety of gene promoters such as those of HNF3B and TTR. Important for liver genes transcription. Stimulates the expression of Onecut3 in the developing endoderm. This Mus musculus (Mouse) protein is Hepatocyte nuclear factor 6 (Onecut1).